We begin with the raw amino-acid sequence, 493 residues long: Mitochondrial distribution and morphology protein 10 (493 aa).

This sequence belongs to the MDM10 family. In terms of assembly, component of the ER-mitochondria encounter structure (ERMES) or MDM complex, composed of MMM1, MDM10, MDM12 and MDM34. Associates with the mitochondrial outer membrane sorting assembly machinery SAM(core) complex, which consists of SAM35, SAM37 and SAM50, to form a SAM(holo) complex.

Its subcellular location is the mitochondrion outer membrane. Functionally, component of the ERMES/MDM complex, which serves as a molecular tether to connect the endoplasmic reticulum and mitochondria. Components of this complex are involved in the control of mitochondrial shape and protein biogenesis and may function in phospholipid exchange. MDM10 is involved in the late assembly steps of the general translocase of the mitochondrial outer membrane (TOM complex). Functions in the TOM40-specific route of the assembly of outer membrane beta-barrel proteins, including the association of TOM40 with the receptor TOM22 and small TOM proteins. Can associate with the SAM(core) complex as well as the MDM12-MMM1 complex, both involved in late steps of the major beta-barrel assembly pathway, that is responsible for biogenesis of all outer membrane beta-barrel proteins. May act as a switch that shuttles between both complexes and channels precursor proteins into the TOM40-specific pathway. Plays a role in mitochondrial morphology and in the inheritance of mitochondria. This chain is Mitochondrial distribution and morphology protein 10, found in Saccharomyces cerevisiae (strain YJM789) (Baker's yeast).